Reading from the N-terminus, the 72-residue chain is U-actitoxin-Aeq5b (72 aa).

An N-terminal signal peptide occupies residues 1-20 (MNQVMTIFLVLGVIVYSVES). 4 disulfide bridges follow: C33-C71, C37-C66, C44-C59, and C50-C56.

The protein belongs to the Acrorhagin I family. In terms of tissue distribution, expressed by acrorhagi.

The protein localises to the secreted. It is found in the nematocyst. Its function is as follows. Toxin that is lethal to crab. It interacts with divalent metal ions (zinc and nickel) suggesting it may function as a metal ion chelator to regulate metal ion levels or as a metal ion transporter, or that its function is modulated by metal ions. Is not active against any of the voltage-gated potassium and sodium channels tested. In addition, it does not show activity in bacterial and fungal growth inhibitory assays as well as in hemolytic assays. The sequence is that of U-actitoxin-Aeq5b from Actinia equina (Beadlet anemone).